A 128-amino-acid chain; its full sequence is Ribosome-binding factor A (128 aa).

It belongs to the RbfA family. Monomer. Binds 30S ribosomal subunits, but not 50S ribosomal subunits or 70S ribosomes.

The protein resides in the cytoplasm. Functionally, one of several proteins that assist in the late maturation steps of the functional core of the 30S ribosomal subunit. Associates with free 30S ribosomal subunits (but not with 30S subunits that are part of 70S ribosomes or polysomes). Required for efficient processing of 16S rRNA. May interact with the 5'-terminal helix region of 16S rRNA. This Rippkaea orientalis (strain PCC 8801 / RF-1) (Cyanothece sp. (strain PCC 8801)) protein is Ribosome-binding factor A.